The chain runs to 93 residues: Protein salt-induced and EIN3/EIL1-dependent 1 (93 aa).

The span at 23–36 (SSLLTESSSSSLCS) shows a compositional bias: low complexity. The disordered stretch occupies residues 23 to 46 (SSLLTESSSSSLCSEEAEGGGGEA).

Triggered by EIN3. Functionally, involved in ethylene-dependent salt stress responses by reducing reactive oxygen species (ROS) accumulation. This is Protein salt-induced and EIN3/EIL1-dependent 1 from Arabidopsis thaliana (Mouse-ear cress).